The chain runs to 57 residues: Benzylsuccinate synthase gamma subunit (57 aa).

As to quaternary structure, heterohexamer composed of 2 alpha subunits, 2 beta subunits and 2 gamma subunits.

It catalyses the reaction toluene + fumarate = 2-benzylsuccinate. It functions in the pathway xenobiotic degradation; toluene degradation. Its activity is regulated as follows. Activated by the benzylsuccinate synthase activating enzyme BssD. Rapidly inactivated by oxygen. Catalyzes the addition of fumarate to the methyl group of toluene, leading to the formation of benzylsuccinate. This is Benzylsuccinate synthase gamma subunit (bssC) from Thauera aromatica.